The primary structure comprises 303 residues: Probable 5-dehydro-4-deoxyglucarate dehydratase (303 aa).

It belongs to the DapA family.

The catalysed reaction is 5-dehydro-4-deoxy-D-glucarate + H(+) = 2,5-dioxopentanoate + CO2 + H2O. Its pathway is carbohydrate acid metabolism; D-glucarate degradation; 2,5-dioxopentanoate from D-glucarate: step 2/2. The polypeptide is Probable 5-dehydro-4-deoxyglucarate dehydratase (Acinetobacter baumannii (strain ATCC 17978 / DSM 105126 / CIP 53.77 / LMG 1025 / NCDC KC755 / 5377)).